A 347-amino-acid polypeptide reads, in one-letter code: Quinolinate synthase (347 aa).

Iminosuccinate-binding residues include His-47 and Ser-68. A [4Fe-4S] cluster-binding site is contributed by Cys-113. Residues 139 to 141 (YAN) and Ser-156 contribute to the iminosuccinate site. Cys-200 serves as a coordination point for [4Fe-4S] cluster. Iminosuccinate-binding positions include 226-228 (HPE) and Thr-243. Position 297 (Cys-297) interacts with [4Fe-4S] cluster.

This sequence belongs to the quinolinate synthase family. Type 1 subfamily. It depends on [4Fe-4S] cluster as a cofactor.

The protein resides in the cytoplasm. The catalysed reaction is iminosuccinate + dihydroxyacetone phosphate = quinolinate + phosphate + 2 H2O + H(+). The protein operates within cofactor biosynthesis; NAD(+) biosynthesis; quinolinate from iminoaspartate: step 1/1. Functionally, catalyzes the condensation of iminoaspartate with dihydroxyacetone phosphate to form quinolinate. The chain is Quinolinate synthase from Salmonella agona (strain SL483).